Here is a 585-residue protein sequence, read N- to C-terminus: MARSRQPTRFSSEAPSESSSSTSPERAADDDTDFFTLQANDSQSSIGAGNPRDSHIQNDPETVLPPIAYLPPEILISIFSKLSSPRDLLSCLLVCRIWALNCVGLLWHRPSCNNWDNLKKIAAAVGEEDSFFLYSSLIKRLNLSALTEDVSDGTVVPFSQCNRIERLTLTNCRKLTDIGVSDLVVGSRHLQALDVSELRSLTDHTLFKVAENCNRLQGLNITGCVKVTDDSLIAVSQNCRLLKRLKLNGVSQVTDKAILSFAQNCPSILEIDLQECKLVTNQSVTALMTTLQNLRELRLAHCTEIDDSAFLDLPRHIQMTSLRILDLTACENIRDEAVERIVSSAPRLRNLVLAKCKFITDRAVWAICKLGKNLHYVHLGHCSNINDSAVIQLVKSCNRIRYIDLACCSRLTDRSVQQLATLPKLRRIGLVKCQLITDASILALARPAQDHSVPCSSLERVHLSYCVNLTMVGIHALLNSCPRLTHLSLTGVAAFLREELTVFCREAPPEFTRQQREVFCVFSGEGVNRLRNHLNREAAPQRDANEATMYDDEEELDEDEGQVTGLMHAAAINDDDYINITPPHA.

The span at Met-1 to Phe-10 shows a compositional bias: polar residues. Disordered stretches follow at residues Met-1–Phe-34 and Asp-41–Pro-60. Residues Ser-11 to Glu-25 show a composition bias toward low complexity. The F-box domain maps to Pro-65–Asn-113. 13 LRR repeats span residues Thr-147–Asn-171, Cys-172–Glu-197, Leu-198–Gly-223, Cys-224–Gly-249, Val-250–Glu-275, Cys-276–His-301, Cys-302–Ala-329, Cys-330–Lys-355, Cys-356–His-381, Cys-382–Cys-407, Cys-408–Lys-432, Cys-433–Tyr-465, and Cys-466–Gly-491.

In terms of assembly, part of a SCF E3 ubiquitin ligase complex. In terms of tissue distribution, specifically expressed in ascus mother cells.

The protein resides in the cytoplasm. Involved in meiosis and required for ascospore formation. Involved in substrate recognition in ubiquitin-dependent degradation. The protein is SCF E3 ubiquitin ligase complex F-box protein grrA (grrA) of Emericella nidulans (strain FGSC A4 / ATCC 38163 / CBS 112.46 / NRRL 194 / M139) (Aspergillus nidulans).